The sequence spans 151 residues: Thymosin beta (151 aa).

Repeat copies occupy residues Leu24–Thr29, Leu62–Val67, Leu100–Thr105, and Leu134–Thr139. A 4 X 6 AA repeat of L-[KH]-[KSH]-[VT]-[EP]-[TV] region spans residues Leu24–Thr139.

The protein belongs to the thymosin beta family. Interacts (via repeats 1, 2 and 4) with G-actin in a 1:3 ratio. Interacts (via repeats 2 and 3) with F-actin. In terms of tissue distribution, at the comma stage, enriched in the developing nerve ring (at protein level). Ubiquitously expressed in larvae and adults with enrichment in the spermatheca, the intestinal tract and the posterior bulb of the pharynx (at protein level). Expressed in oocytes and in the gonad (at protein level).

The protein localises to the cytoplasm. Its subcellular location is the cell cortex. It localises to the cell junction. It is found in the cytoskeleton. In terms of biological role, plays an important role in the organization of the cytoskeleton by regulating actin polymerization in two ways. Firstly, by binding to and sequestering actin monomers (G actin) inhibits actin polymerization. Secondly, by binding directly filamentous actin (F actin) promotes actin polymerization. Regulates the formation of cortical actin in oocytes conferring them enough rigidity to sustain the contractions during ovulation. The protein is Thymosin beta of Caenorhabditis elegans.